We begin with the raw amino-acid sequence, 476 residues long: MVTAAASTSQVVGDSDFVVADITLADFGRKELAIAEKEMPGLMSLRDKYGQEKPLQGARIAGSLHMTIQTGVLIETLVALGAQVRWASCNIFSTQDHAAAAIAKAGVPVFAKKGETLSEYWSFTHSILEWSGEQGPNMILDDGGDATGLVILGSKAEKDISVLDNPSNEEEIALYASIKSKLSTDKSFYSRIKKIILGVTEETTTGVARLYQMQKNGELPFPAINVNDSVTKSKFDNLYGCRESLVDGIKRATDVMVAGKVALVIGYGDVGKGSAQSLRGLGATVMIAEIDPICALQAAMEGYRVVRLDDVVEEIDIFVTATGNFQVICHDHLIRMKDEAIVSNIGHFDNEIDVASLKSYQWENIKPQVDHITLPSGNKIILLAEGRLVNLGCATGHPSFVMSNSFTNQVLAQIELFKKGDSYQNNVYVLPKHLDEMVARLHLDKIGANLTELSKEQADYINVPIEGPYKSEQYRY.

Positions 67, 142, and 202 each coordinate substrate. 203–205 (TTT) is an NAD(+) binding site. Substrate is bound by residues Lys-232 and Asp-236. Residues Asn-237, 266–271 (GYGDVG), Glu-289, Asn-324, 345–347 (IGH), and Asn-390 each bind NAD(+).

This sequence belongs to the adenosylhomocysteinase family. NAD(+) serves as cofactor.

It is found in the cytoplasm. The catalysed reaction is S-adenosyl-L-homocysteine + H2O = L-homocysteine + adenosine. It functions in the pathway amino-acid biosynthesis; L-homocysteine biosynthesis; L-homocysteine from S-adenosyl-L-homocysteine: step 1/1. May play a key role in the regulation of the intracellular concentration of adenosylhomocysteine. This is Adenosylhomocysteinase from Prochlorococcus marinus (strain SARG / CCMP1375 / SS120).